A 111-amino-acid polypeptide reads, in one-letter code: Large ribosomal subunit protein uL22 (111 aa).

It belongs to the universal ribosomal protein uL22 family. In terms of assembly, part of the 50S ribosomal subunit.

Functionally, this protein binds specifically to 23S rRNA; its binding is stimulated by other ribosomal proteins, e.g. L4, L17, and L20. It is important during the early stages of 50S assembly. It makes multiple contacts with different domains of the 23S rRNA in the assembled 50S subunit and ribosome. The globular domain of the protein is located near the polypeptide exit tunnel on the outside of the subunit, while an extended beta-hairpin is found that lines the wall of the exit tunnel in the center of the 70S ribosome. The chain is Large ribosomal subunit protein uL22 from Wigglesworthia glossinidia brevipalpis.